Here is a 544-residue protein sequence, read N- to C-terminus: CTP synthase (544 aa).

The segment at 1–266 (MSTKFIFVTG…DYFVCRRFHL (266 aa)) is amidoligase domain. CTP is bound at residue S14. S14 contacts UTP. ATP-binding positions include 15–20 (SLGKGI) and D72. Mg(2+) is bound by residues D72 and E140. CTP-binding positions include 147–149 (DIE), 187–192 (KTKPTQ), and K223. Residues 187-192 (KTKPTQ) and K223 each bind UTP. In terms of domain architecture, Glutamine amidotransferase type-1 spans 291–542 (TIGMVGKYIE…VAAAHIHQKA (252 aa)). G352 provides a ligand contact to L-glutamine. The active-site Nucleophile; for glutamine hydrolysis is the C379. L-glutamine contacts are provided by residues 380–383 (LGMQ), E403, and R470. Catalysis depends on residues H515 and E517.

This sequence belongs to the CTP synthase family. As to quaternary structure, homotetramer.

It catalyses the reaction UTP + L-glutamine + ATP + H2O = CTP + L-glutamate + ADP + phosphate + 2 H(+). The catalysed reaction is L-glutamine + H2O = L-glutamate + NH4(+). The enzyme catalyses UTP + NH4(+) + ATP = CTP + ADP + phosphate + 2 H(+). Its pathway is pyrimidine metabolism; CTP biosynthesis via de novo pathway; CTP from UDP: step 2/2. With respect to regulation, allosterically activated by GTP, when glutamine is the substrate; GTP has no effect on the reaction when ammonia is the substrate. The allosteric effector GTP functions by stabilizing the protein conformation that binds the tetrahedral intermediate(s) formed during glutamine hydrolysis. Inhibited by the product CTP, via allosteric rather than competitive inhibition. Functionally, catalyzes the ATP-dependent amination of UTP to CTP with either L-glutamine or ammonia as the source of nitrogen. Regulates intracellular CTP levels through interactions with the four ribonucleotide triphosphates. This is CTP synthase from Pseudoalteromonas translucida (strain TAC 125).